Consider the following 133-residue polypeptide: UPF0344 protein SH1980 (133 aa).

4 consecutive transmembrane segments (helical) span residues 1-21 (MLHMHIASWALTIILYVIAFL), 42-62 (VFMLLTLFSGFWLLIQEFMAA), 71-91 (MLLTLKMLCGIAVVALMEVSI), and 103-123 (LFWATIILIIITMSLGIILPW).

It belongs to the UPF0344 family.

Its subcellular location is the cell membrane. This chain is UPF0344 protein SH1980, found in Staphylococcus haemolyticus (strain JCSC1435).